Consider the following 284-residue polypeptide: 4-hydroxybenzoate octaprenyltransferase (284 aa).

7 consecutive transmembrane segments (helical) span residues 13-32 (FNRPIGSFLLMWPTLWALWL), 90-110 (ALMLFCALSILSFILVLFTDL), 112-132 (TILLSFVGLGLAALYPFMKRY), 134-154 (HLPQLFLGLAFSWAIPMAYSA), 164-184 (LWMLFVANCFWTIAYDTYYAM), 200-220 (ILFGQYDLFVIICLQGLTLSL), and 224-244 (IGLLAGLHWLYFVSLIVCVGL).

It belongs to the UbiA prenyltransferase family. Requires Mg(2+) as cofactor.

The protein resides in the cell inner membrane. The enzyme catalyses all-trans-octaprenyl diphosphate + 4-hydroxybenzoate = 4-hydroxy-3-(all-trans-octaprenyl)benzoate + diphosphate. Its pathway is cofactor biosynthesis; ubiquinone biosynthesis. In terms of biological role, catalyzes the prenylation of para-hydroxybenzoate (PHB) with an all-trans polyprenyl group. Mediates the second step in the final reaction sequence of ubiquinone-8 (UQ-8) biosynthesis, which is the condensation of the polyisoprenoid side chain with PHB, generating the first membrane-bound Q intermediate 3-octaprenyl-4-hydroxybenzoate. The chain is 4-hydroxybenzoate octaprenyltransferase from Marinomonas sp. (strain MWYL1).